Consider the following 683-residue polypeptide: Long-chain-fatty-acid--CoA ligase 5 (683 aa).

The chain crosses the membrane as a helical; Signal-anchor for type III membrane protein span at residues 12–32; it reads LPTPALICLLTFGTAIFLWLI. The Cytoplasmic segment spans residues 33–683; the sequence is NRPQPVLPLI…IKSLYESIEE (651 aa). N6-acetyllysine is present on K361.

This sequence belongs to the ATP-dependent AMP-binding enzyme family.

It localises to the mitochondrion. Its subcellular location is the endoplasmic reticulum. It is found in the mitochondrion outer membrane. The protein resides in the endoplasmic reticulum membrane. The protein localises to the cell membrane. It carries out the reaction a long-chain fatty acid + ATP + CoA = a long-chain fatty acyl-CoA + AMP + diphosphate. The catalysed reaction is (5Z,8Z,11Z,14Z)-eicosatetraenoate + ATP + CoA = (5Z,8Z,11Z,14Z)-eicosatetraenoyl-CoA + AMP + diphosphate. It catalyses the reaction hexadecanoate + ATP + CoA = hexadecanoyl-CoA + AMP + diphosphate. The enzyme catalyses (E)-hexadec-2-enoate + ATP + CoA = (2E)-hexadecenoyl-CoA + AMP + diphosphate. It carries out the reaction 15-hydroxy-(5Z,8Z,11Z,13E)-eicosatetraenoate + ATP + CoA = 15-hydroxy-(5Z,8Z,11Z,13E)-eicosatetraenoyl-CoA + AMP + diphosphate. The catalysed reaction is 12-hydroxy-(5Z,8Z,10E,14Z)-eicosatetraenoate + ATP + CoA = 12-hydroxy-(5Z,8Z,10E,14Z)-eicosatetraenoyl-CoA + AMP + diphosphate. It catalyses the reaction 5-hydroxy-(6E,8Z,11Z,14Z)-eicosatetraenoate + ATP + CoA = 5-hydroxy-(6E,8Z,11Z,14Z)-eicosatetraenoyl-CoA + AMP + diphosphate. The enzyme catalyses 14,15-epoxy-(5Z,8Z,11Z)-eicosatrienoate + ATP + CoA = 14,15-epoxy-(5Z,8Z,11Z)-eicosatrienoyl-CoA + AMP + diphosphate. It carries out the reaction 11,12-epoxy-(5Z,8Z,14Z)-eicosatrienoate + ATP + CoA = 11,12-epoxy-(5Z,8Z,14Z)-eicosatrienoyl-CoA + AMP + diphosphate. The catalysed reaction is (9Z)-octadecenoate + ATP + CoA = (9Z)-octadecenoyl-CoA + AMP + diphosphate. Functionally, catalyzes the conversion of long-chain fatty acids to their active form acyl-CoAs for both synthesis of cellular lipids, and degradation via beta-oxidation. ACSL5 may activate fatty acids from exogenous sources for the synthesis of triacylglycerol destined for intracellular storage. It was suggested that it may also stimulate fatty acid oxidation. At the villus tip of the crypt-villus axis of the small intestine may sensitize epithelial cells to apoptosis specifically triggered by the death ligand TRAIL. May have a role in the survival of glioma cells. Utilizes a wide range of saturated fatty acids with a preference for C16-C18 unsaturated fatty acids. The sequence is that of Long-chain-fatty-acid--CoA ligase 5 from Mus musculus (Mouse).